We begin with the raw amino-acid sequence, 177 residues long: ATP synthase subunit delta (177 aa).

This sequence belongs to the ATPase delta chain family. As to quaternary structure, F-type ATPases have 2 components, F(1) - the catalytic core - and F(0) - the membrane proton channel. F(1) has five subunits: alpha(3), beta(3), gamma(1), delta(1), epsilon(1). F(0) has three main subunits: a(1), b(2) and c(10-14). The alpha and beta chains form an alternating ring which encloses part of the gamma chain. F(1) is attached to F(0) by a central stalk formed by the gamma and epsilon chains, while a peripheral stalk is formed by the delta and b chains.

It localises to the cell inner membrane. Its function is as follows. F(1)F(0) ATP synthase produces ATP from ADP in the presence of a proton or sodium gradient. F-type ATPases consist of two structural domains, F(1) containing the extramembraneous catalytic core and F(0) containing the membrane proton channel, linked together by a central stalk and a peripheral stalk. During catalysis, ATP synthesis in the catalytic domain of F(1) is coupled via a rotary mechanism of the central stalk subunits to proton translocation. In terms of biological role, this protein is part of the stalk that links CF(0) to CF(1). It either transmits conformational changes from CF(0) to CF(1) or is implicated in proton conduction. This Flavobacterium johnsoniae (strain ATCC 17061 / DSM 2064 / JCM 8514 / BCRC 14874 / CCUG 350202 / NBRC 14942 / NCIMB 11054 / UW101) (Cytophaga johnsonae) protein is ATP synthase subunit delta.